The primary structure comprises 571 residues: Proline--tRNA ligase (571 aa).

It belongs to the class-II aminoacyl-tRNA synthetase family. ProS type 1 subfamily. Homodimer.

The protein resides in the cytoplasm. The enzyme catalyses tRNA(Pro) + L-proline + ATP = L-prolyl-tRNA(Pro) + AMP + diphosphate. Its function is as follows. Catalyzes the attachment of proline to tRNA(Pro) in a two-step reaction: proline is first activated by ATP to form Pro-AMP and then transferred to the acceptor end of tRNA(Pro). As ProRS can inadvertently accommodate and process non-cognate amino acids such as alanine and cysteine, to avoid such errors it has two additional distinct editing activities against alanine. One activity is designated as 'pretransfer' editing and involves the tRNA(Pro)-independent hydrolysis of activated Ala-AMP. The other activity is designated 'posttransfer' editing and involves deacylation of mischarged Ala-tRNA(Pro). The misacylated Cys-tRNA(Pro) is not edited by ProRS. In Actinobacillus pleuropneumoniae serotype 7 (strain AP76), this protein is Proline--tRNA ligase.